Reading from the N-terminus, the 494-residue chain is Ketol-acid reductoisomerase (NADP(+)) (494 aa).

The 195-residue stretch at 14–208 (LDQLGRCRFM…GGHRAGCLES (195 aa)) folds into the KARI N-terminal Rossmann domain. NADP(+) is bound by residues 45–48 (CGAQ), Arg68, Arg76, Ser78, and 108–110 (DKQ). His132 is a catalytic residue. Gly158 is an NADP(+) binding site. 2 KARI C-terminal knotted domains span residues 209-344 (SFVA…NYPA) and 345-487 (SDVE…MSDM). Residues Asp217, Glu221, Glu389, and Glu393 each coordinate Mg(2+). Ser414 lines the substrate pocket.

This sequence belongs to the ketol-acid reductoisomerase family. Mg(2+) serves as cofactor.

It carries out the reaction (2R)-2,3-dihydroxy-3-methylbutanoate + NADP(+) = (2S)-2-acetolactate + NADPH + H(+). The enzyme catalyses (2R,3R)-2,3-dihydroxy-3-methylpentanoate + NADP(+) = (S)-2-ethyl-2-hydroxy-3-oxobutanoate + NADPH + H(+). It participates in amino-acid biosynthesis; L-isoleucine biosynthesis; L-isoleucine from 2-oxobutanoate: step 2/4. It functions in the pathway amino-acid biosynthesis; L-valine biosynthesis; L-valine from pyruvate: step 2/4. Involved in the biosynthesis of branched-chain amino acids (BCAA). Catalyzes an alkyl-migration followed by a ketol-acid reduction of (S)-2-acetolactate (S2AL) to yield (R)-2,3-dihydroxy-isovalerate. In the isomerase reaction, S2AL is rearranged via a Mg-dependent methyl migration to produce 3-hydroxy-3-methyl-2-ketobutyrate (HMKB). In the reductase reaction, this 2-ketoacid undergoes a metal-dependent reduction by NADPH to yield (R)-2,3-dihydroxy-isovalerate. This is Ketol-acid reductoisomerase (NADP(+)) from Vibrio atlanticus (strain LGP32) (Vibrio splendidus (strain Mel32)).